A 917-amino-acid chain; its full sequence is Isoleucine--tRNA ligase (917 aa).

The 'HIGH' region motif lies at 57-67 (PYANGNLHMGH). Glutamate 554 provides a ligand contact to L-isoleucyl-5'-AMP. The 'KMSKS' region signature appears at 595–599 (KMSKS). Lysine 598 provides a ligand contact to ATP. Cysteine 886, cysteine 889, cysteine 906, and cysteine 909 together coordinate Zn(2+).

This sequence belongs to the class-I aminoacyl-tRNA synthetase family. IleS type 1 subfamily. In terms of assembly, monomer. Zn(2+) is required as a cofactor.

It localises to the cytoplasm. The catalysed reaction is tRNA(Ile) + L-isoleucine + ATP = L-isoleucyl-tRNA(Ile) + AMP + diphosphate. Its function is as follows. Catalyzes the attachment of isoleucine to tRNA(Ile). As IleRS can inadvertently accommodate and process structurally similar amino acids such as valine, to avoid such errors it has two additional distinct tRNA(Ile)-dependent editing activities. One activity is designated as 'pretransfer' editing and involves the hydrolysis of activated Val-AMP. The other activity is designated 'posttransfer' editing and involves deacylation of mischarged Val-tRNA(Ile). The protein is Isoleucine--tRNA ligase of Staphylococcus aureus (strain Mu3 / ATCC 700698).